The chain runs to 473 residues: Ribulose bisphosphate carboxylase large chain (473 aa).

Asparagine 116 and threonine 166 together coordinate substrate. The active-site Proton acceptor is the lysine 168. Lysine 170 is a binding site for substrate. Residues lysine 194, aspartate 196, and glutamate 197 each coordinate Mg(2+). Lysine 194 bears the N6-carboxylysine mark. Histidine 287 functions as the Proton acceptor in the catalytic mechanism. The substrate site is built by arginine 288, histidine 320, and serine 372.

The protein belongs to the RuBisCO large chain family. Type I subfamily. Heterohexadecamer of 8 large chains and 8 small chains. Mg(2+) serves as cofactor.

It carries out the reaction 2 (2R)-3-phosphoglycerate + 2 H(+) = D-ribulose 1,5-bisphosphate + CO2 + H2O. The catalysed reaction is D-ribulose 1,5-bisphosphate + O2 = 2-phosphoglycolate + (2R)-3-phosphoglycerate + 2 H(+). Functionally, ruBisCO catalyzes two reactions: the carboxylation of D-ribulose 1,5-bisphosphate, the primary event in carbon dioxide fixation, as well as the oxidative fragmentation of the pentose substrate. Both reactions occur simultaneously and in competition at the same active site. The protein is Ribulose bisphosphate carboxylase large chain of Cupriavidus metallidurans (strain ATCC 43123 / DSM 2839 / NBRC 102507 / CH34) (Ralstonia metallidurans).